A 113-amino-acid chain; its full sequence is Photosystem II reaction center Psb28 protein (113 aa).

It belongs to the Psb28 family. Part of the photosystem II complex.

It is found in the cellular thylakoid membrane. This is Photosystem II reaction center Psb28 protein from Nostoc punctiforme (strain ATCC 29133 / PCC 73102).